A 208-amino-acid chain; its full sequence is Small ribosomal subunit protein uS4 (208 aa).

Residues 97–158 (TRLDNVIYRM…RAQKYLCVQE (62 aa)) form the S4 RNA-binding domain.

Belongs to the universal ribosomal protein uS4 family. In terms of assembly, part of the 30S ribosomal subunit. Contacts protein S5. The interaction surface between S4 and S5 is involved in control of translational fidelity.

Functionally, one of the primary rRNA binding proteins, it binds directly to 16S rRNA where it nucleates assembly of the body of the 30S subunit. In terms of biological role, with S5 and S12 plays an important role in translational accuracy. The chain is Small ribosomal subunit protein uS4 from Xylella fastidiosa (strain M12).